We begin with the raw amino-acid sequence, 366 residues long: tRNA/tmRNA (uracil-C(5))-methyltransferase (366 aa).

S-adenosyl-L-methionine-binding residues include Gln-190, Tyr-218, Asn-223, Glu-239, and Asp-299. Cys-324 functions as the Nucleophile in the catalytic mechanism. Residue Glu-358 is the Proton acceptor of the active site.

This sequence belongs to the class I-like SAM-binding methyltransferase superfamily. RNA M5U methyltransferase family. TrmA subfamily.

The enzyme catalyses uridine(54) in tRNA + S-adenosyl-L-methionine = 5-methyluridine(54) in tRNA + S-adenosyl-L-homocysteine + H(+). It catalyses the reaction uridine(341) in tmRNA + S-adenosyl-L-methionine = 5-methyluridine(341) in tmRNA + S-adenosyl-L-homocysteine + H(+). In terms of biological role, dual-specificity methyltransferase that catalyzes the formation of 5-methyluridine at position 54 (m5U54) in all tRNAs, and that of position 341 (m5U341) in tmRNA (transfer-mRNA). The protein is tRNA/tmRNA (uracil-C(5))-methyltransferase of Enterobacter sp. (strain 638).